We begin with the raw amino-acid sequence, 152 residues long: Em-like protein GEA1 (152 aa).

Composition is skewed to basic and acidic residues over residues 1–17 (MASKQLSREELDEKAKQ) and 32–63 (EAQEHLAEGRSKGGQTRKEQLGHEGYQEIGHK). Residues 1-63 (MASKQLSREE…HEGYQEIGHK (63 aa)) form a disordered region. Repeat copies occupy residues 44-63 (GGQTRKEQLGHEGYQEIGHK), 64-83 (GGEARKEQLGHEGYQEMGHK), 84-103 (GGEARKEQLGHEGYQEMGHK), and 104-123 (GGEARKEQLGHEGYKEMGRK). The tract at residues 44-123 (GGQTRKEQLG…HEGYKEMGRK (80 aa)) is 4 X 20 AA tandem repeats. Positions 116 to 152 (GYKEMGRKGGLSTMEKSGGERAEEEGIEIDESKFTNK) are disordered.

The protein belongs to the small hydrophilic plant seed protein family. In terms of tissue distribution, in seeds only. Specifically located to vascular bundles in the cotyledon and axis of the dry seed. Also found in the epiderm and outer layers of the cortex in the embryo axis.

It is thought to provide protection for the cytoplasm during the desiccation stage of embryo development. The chain is Em-like protein GEA1 (EM1) from Arabidopsis thaliana (Mouse-ear cress).